We begin with the raw amino-acid sequence, 362 residues long: Class I histocompatibility antigen, Gogo-B*0101 alpha chain (362 aa).

An N-terminal signal peptide occupies residues 1-24 (MRVTAPRTLLLLLSAALALTETWA). Residues 25–114 (GSHSMRYFDT…ALRYYNQSEA (90 aa)) form an alpha-1 region. The Extracellular segment spans residues 25–308 (GSHSMRYFDT…EPSSQSTIPI (284 aa)). N-linked (GlcNAc...) asparagine glycosylation occurs at N110. Residues 115-206 (GSHTIQRMFG…ENGRETLQRA (92 aa)) form an alpha-2 region. 2 disulfide bridges follow: C125–C188 and C227–C283. Residues 207–298 (DTPKTHVTHH…GLPKPLTLRW (92 aa)) are alpha-3. In terms of domain architecture, Ig-like C1-type spans 209–295 (PKTHVTHHPI…QHEGLPKPLT (87 aa)). Positions 299–308 (EPSSQSTIPI) are connecting peptide. A helical transmembrane segment spans residues 309–332 (VGIVAGLAVLAVVVIGAVVTAVIC). Topologically, residues 333–362 (RRKSSGGKGGSYSQAASSDSAQGSDVSLTA) are cytoplasmic. The disordered stretch occupies residues 335–362 (KSSGGKGGSYSQAASSDSAQGSDVSLTA). Positions 343 to 362 (SYSQAASSDSAQGSDVSLTA) are enriched in low complexity. Residues S356 and S359 each carry the phosphoserine modification.

This sequence belongs to the MHC class I family. Heterodimer of an alpha chain and a beta chain (beta-2-microglobulin).

It is found in the membrane. In terms of biological role, involved in the presentation of foreign antigens to the immune system. This is Class I histocompatibility antigen, Gogo-B*0101 alpha chain from Gorilla gorilla gorilla (Western lowland gorilla).